We begin with the raw amino-acid sequence, 827 residues long: 4-hydroxy-3-methylbut-2-enyl diphosphate reductase (827 aa).

The 4-hydroxy-3-methylbut-2-enyl diphosphate reductase stretch occupies residues 1-284 (MEIIRAKHMG…MNIEKKVRGI (284 aa)). [4Fe-4S] cluster is bound at residue C12. (2E)-4-hydroxy-3-methylbut-2-enyl diphosphate is bound by residues H40 and H79. Positions 40 and 79 each coordinate dimethylallyl diphosphate. H40 and H79 together coordinate isopentenyl diphosphate. Residue C101 participates in [4Fe-4S] cluster binding. (2E)-4-hydroxy-3-methylbut-2-enyl diphosphate is bound at residue H129. Residue H129 participates in dimethylallyl diphosphate binding. H129 provides a ligand contact to isopentenyl diphosphate. The active-site Proton donor is E131. T168 is a binding site for (2E)-4-hydroxy-3-methylbut-2-enyl diphosphate. A [4Fe-4S] cluster-binding site is contributed by C196. (2E)-4-hydroxy-3-methylbut-2-enyl diphosphate contacts are provided by S224, S225, N226, and S268. Residues S224, S225, N226, and S268 each contribute to the dimethylallyl diphosphate site. S224, S225, N226, and S268 together coordinate isopentenyl diphosphate. 4 consecutive S1 motif domains span residues 477-545 (GQIV…LSIK), 562-632 (DDEI…LGIK), 649-716 (DTVI…GSLK), and 733-802 (GTTV…LSIK).

The protein in the N-terminal section; belongs to the IspH family. It depends on [4Fe-4S] cluster as a cofactor.

It carries out the reaction isopentenyl diphosphate + 2 oxidized [2Fe-2S]-[ferredoxin] + H2O = (2E)-4-hydroxy-3-methylbut-2-enyl diphosphate + 2 reduced [2Fe-2S]-[ferredoxin] + 2 H(+). The enzyme catalyses dimethylallyl diphosphate + 2 oxidized [2Fe-2S]-[ferredoxin] + H2O = (2E)-4-hydroxy-3-methylbut-2-enyl diphosphate + 2 reduced [2Fe-2S]-[ferredoxin] + 2 H(+). It participates in isoprenoid biosynthesis; dimethylallyl diphosphate biosynthesis; dimethylallyl diphosphate from (2E)-4-hydroxy-3-methylbutenyl diphosphate: step 1/1. The protein operates within isoprenoid biosynthesis; isopentenyl diphosphate biosynthesis via DXP pathway; isopentenyl diphosphate from 1-deoxy-D-xylulose 5-phosphate: step 6/6. Functionally, catalyzes the conversion of 1-hydroxy-2-methyl-2-(E)-butenyl 4-diphosphate (HMBPP) into a mixture of isopentenyl diphosphate (IPP) and dimethylallyl diphosphate (DMAPP). Acts in the terminal step of the DOXP/MEP pathway for isoprenoid precursor biosynthesis. The protein is 4-hydroxy-3-methylbut-2-enyl diphosphate reductase of Fusobacterium nucleatum subsp. nucleatum (strain ATCC 25586 / DSM 15643 / BCRC 10681 / CIP 101130 / JCM 8532 / KCTC 2640 / LMG 13131 / VPI 4355).